A 611-amino-acid polypeptide reads, in one-letter code: tRNA uridine 5-carboxymethylaminomethyl modification enzyme MnmG (611 aa).

12 to 17 (GGGHSG) lines the FAD pocket. Residue 271-285 (GPRYCPSIEEKVYRF) coordinates NAD(+).

It belongs to the MnmG family. Homodimer. Heterotetramer of two MnmE and two MnmG subunits. It depends on FAD as a cofactor.

It localises to the cytoplasm. Functionally, NAD-binding protein involved in the addition of a carboxymethylaminomethyl (cmnm) group at the wobble position (U34) of certain tRNAs, forming tRNA-cmnm(5)s(2)U34. This Karelsulcia muelleri (strain GWSS) (Sulcia muelleri) protein is tRNA uridine 5-carboxymethylaminomethyl modification enzyme MnmG.